A 148-amino-acid chain; its full sequence is Lysozyme-like protein 6 (148 aa).

Residues 1–19 (MLKALFICVASCLLVVNDG) form the signal peptide. Residues 20–148 (NIIHRCSLAK…SYWMTGCHLG (129 aa)) form the C-type lysozyme domain. Intrachain disulfides connect Cys-25-Cys-145, Cys-49-Cys-133, Cys-83-Cys-98, and Cys-94-Cys-112. Glu-54 is a catalytic residue. Asn-58 carries N-linked (GlcNAc...) asparagine glycosylation. Asp-71 is a catalytic residue.

The protein belongs to the glycosyl hydrolase 22 family. As to quaternary structure, monomer. As to expression, expressed strongly in testis and epididymis and weakly in seminal vesicle, vas deferens, kidney and spleen. Highly expressed in primary spermatocytes and round spermatids (at protein level).

It localises to the secreted. Its subcellular location is the cell surface. The protein resides in the cell projection. It is found in the cilium. The protein localises to the flagellum. It carries out the reaction Hydrolysis of (1-&gt;4)-beta-linkages between N-acetylmuramic acid and N-acetyl-D-glucosamine residues in a peptidoglycan and between N-acetyl-D-glucosamine residues in chitodextrins.. In terms of biological role, may be involved sperm-egg plasma membrane adhesion and fusion during fertilization. Exhibits bacteriolytic activity in vitro against Micrococcus luteus and Staphylococcus aureus. Shows weak bacteriolytic activity against Gram-positive bacteria at physiological pH. Bacteriolytic activity is pH-dependent, with a maximum at around pH 5.6. This is Lysozyme-like protein 6 (Lyzl6) from Mus musculus (Mouse).